Consider the following 479-residue polypeptide: Leucine-rich repeat-containing protein 74A (479 aa).

Acidic residues predominate over residues 1–10; sequence MDDDDIEPLE. Residues 1 to 29 are disordered; that stretch reads MDDDDIEPLEYETKDETEAALAPQSSEDT. 8 LRR repeats span residues 119–140, 147–167, 176–197, 204–225, 232–253, 260–281, 288–309, and 316–336; these read TVLK…SLME, YLQE…RIIS, SLWK…LLCQ, RIRS…YLGQ, GLQS…ALCN, TLKK…ALGD, CLVY…RISK, and CLQV…YSLI.

In Rattus norvegicus (Rat), this protein is Leucine-rich repeat-containing protein 74A.